The chain runs to 268 residues: Energy-coupling factor transporter transmembrane protein EcfT (268 aa).

A run of 5 helical transmembrane segments spans residues 29–49, 75–95, 107–127, 152–172, and 242–262; these read VFIFLVFMFMTRDPLLLTVAV, IIIVLTFVLHLFMTGGGEVIV, LIEGFMLAMKLAMIITIASLL, LPTHELALMMSIALRFIPTLI, and WGLKDSVVLAVFLLFAAAVMA.

It belongs to the energy-coupling factor EcfT family. Forms a stable energy-coupling factor (ECF) transporter complex composed of 2 membrane-embedded substrate-binding proteins (S component), 2 ATP-binding proteins (A component) and 2 transmembrane proteins (T component). May be able to interact with more than 1 S component at a time.

The protein resides in the cell membrane. Functionally, transmembrane (T) component of an energy-coupling factor (ECF) ABC-transporter complex. Unlike classic ABC transporters this ECF transporter provides the energy necessary to transport a number of different substrates. The chain is Energy-coupling factor transporter transmembrane protein EcfT from Bacillus selenitireducens (strain ATCC 700615 / DSM 15326 / MLS10).